Reading from the N-terminus, the 69-residue chain is FMRFamide-like neuropeptides 24 (69 aa).

Positions 1 to 25 (MLSSRTSSIILILAILVAIMAVAQC) are cleaved as a signal peptide. Positions 26-51 (RNIQYDVEEMTPEAAFRYAQWGEIPH) are excised as a propeptide. Phenylalanine 64 is subject to Phenylalanine amide. Residues 68–69 (SI) constitute a propeptide that is removed on maturation.

It belongs to the FARP (FMRFamide related peptide) family.

It localises to the secreted. Probable FMRFamide-like neuropeptides. Plays a role in behaviors associated with a sleep-like state induced by stress (SIS), acting in concert with the FMRFamide related peptide flp-13 and neuropeptide-like protein nlp-8. This chain is FMRFamide-like neuropeptides 24, found in Caenorhabditis elegans.